A 685-amino-acid polypeptide reads, in one-letter code: Galactocerebrosidase (685 aa).

The N-terminal stretch at 1 to 42 is a signal peptide; it reads MAEWLLSASWQRRAKAMTAAAGSAGRAAVPLLLCALLAPGGA. Thr-109 lines the substrate pocket. The N-linked (GlcNAc...) asparagine glycan is linked to Asn-143. Residues Trp-151 and Asn-197 each contribute to the substrate site. Glu-198 acts as the Proton donor/acceptor in catalysis. Glu-274 functions as the Nucleophile in the catalytic mechanism. Cys-287 and Cys-394 form a disulfide bridge. An N-linked (GlcNAc...) asparagine glycan is attached at Asn-379. A substrate-binding site is contributed by Arg-396. 4 N-linked (GlcNAc...) asparagine glycosylation sites follow: Asn-403, Asn-556, Asn-559, and Asn-602.

The protein belongs to the glycosyl hydrolase 59 family. Detected in urine. Detected in testis, brain and placenta (at protein level). Detected in kidney and liver.

It is found in the lysosome. The catalysed reaction is a beta-D-galactosyl-(1&lt;-&gt;1')-N-acylsphing-4-enine + H2O = an N-acylsphing-4-enine + D-galactose. It catalyses the reaction beta-D-galactosyl-(1&lt;-&gt;1)-sphing-4-enine + H2O = sphing-4-enine + D-galactose. It carries out the reaction a D-galactosylceramide + H2O = an N-acyl-sphingoid base + D-galactose. Hydrolyzes the galactose ester bonds of glycolipids such as galactosylceramide and galactosylsphingosine. Enzyme with very low activity responsible for the lysosomal catabolism of galactosylceramide, a major lipid in myelin, kidney and epithelial cells of small intestine and colon. This Homo sapiens (Human) protein is Galactocerebrosidase.